Reading from the N-terminus, the 461-residue chain is A-type ATP synthase subunit B (461 aa).

It belongs to the ATPase alpha/beta chains family. Has multiple subunits with at least A(3), B(3), C, D, E, F, H, I and proteolipid K(x).

It is found in the cell membrane. Functionally, component of the A-type ATP synthase that produces ATP from ADP in the presence of a proton gradient across the membrane. The B chain is a regulatory subunit. In Methanoculleus marisnigri (strain ATCC 35101 / DSM 1498 / JR1), this protein is A-type ATP synthase subunit B.